Consider the following 243-residue polypeptide: Ribosomal RNA small subunit methyltransferase J (243 aa).

S-adenosyl-L-methionine-binding positions include 112 to 113 (ER) and aspartate 164.

It belongs to the methyltransferase superfamily. RsmJ family.

The protein localises to the cytoplasm. It catalyses the reaction guanosine(1516) in 16S rRNA + S-adenosyl-L-methionine = N(2)-methylguanosine(1516) in 16S rRNA + S-adenosyl-L-homocysteine + H(+). Its function is as follows. Specifically methylates the guanosine in position 1516 of 16S rRNA. This Legionella pneumophila (strain Paris) protein is Ribosomal RNA small subunit methyltransferase J.